The primary structure comprises 239 residues: tRNA (guanine-N(1)-)-methyltransferase (239 aa).

S-adenosyl-L-methionine-binding positions include glycine 110 and 130-135 (VGDYVL).

This sequence belongs to the RNA methyltransferase TrmD family. In terms of assembly, homodimer.

It localises to the cytoplasm. The enzyme catalyses guanosine(37) in tRNA + S-adenosyl-L-methionine = N(1)-methylguanosine(37) in tRNA + S-adenosyl-L-homocysteine + H(+). In terms of biological role, specifically methylates guanosine-37 in various tRNAs. The protein is tRNA (guanine-N(1)-)-methyltransferase of Borrelia hermsii (strain HS1 / DAH).